Consider the following 254-residue polypeptide: Photosystem II 22 kDa protein 2, chloroplastic (254 aa).

A chloroplast-targeting transit peptide spans 1–38 (MALQQSMAMPMMVVSDLGTAPRSSPMVQLQRMKKHLVV). 2 consecutive repeat copies span residues 42-148 (FKSR…FVDD) and 149-253 (ATGL…DNDD). A run of 4 helical transmembrane segments spans residues 86–106 (VAML…KGIL), 120–140 (AEPL…GALG), 184–204 (LFVG…EIIT), and 219–239 (PINE…FAAI).

It belongs to the ELIP/psbS family.

It localises to the plastid. The protein resides in the chloroplast thylakoid membrane. Involved in high light-mediated energy-dependent nonphotochemical quenching (NPQ, qE) and thermal dissipation (TD) thus regulating energy conversion in photosystem II and protecting from photoinhibition. Also seems to regulate quantum yield of electron transport in fluctuating light conditions. The chain is Photosystem II 22 kDa protein 2, chloroplastic from Oryza sativa subsp. japonica (Rice).